We begin with the raw amino-acid sequence, 562 residues long: Cytosolic Fe-S cluster assembly factor nar1 (562 aa).

Residue C20 coordinates [4Fe-4S] cluster. The disordered stretch occupies residues 28-47; sequence PKNESSNSQNPYEVTTEDKV. Residues 29-40 show a composition bias toward polar residues; sequence KNESSNSQNPYE. C62, C65, C68, C214, and C269 together coordinate [4Fe-4S] cluster. The tract at residues 439-462 is disordered; it reads ARVPAASAGGNRRQPISRNSASAG. Positions 452 to 462 are enriched in polar residues; it reads QPISRNSASAG. Positions 475 and 479 each coordinate [4Fe-4S] cluster. Disordered regions lie at residues 492 to 513 and 541 to 562; these read REAS…PTPH and HSPS…IGLT. Polar residues predominate over residues 494–505; the sequence is ASTSTQSVTAVE.

Belongs to the NARF family.

In terms of biological role, component of the cytosolic Fe/S protein assembly machinery. Required for maturation of extramitochondrial Fe/S proteins. May play a role in the transfer of pre-assembled Fe/S clusters to target apoproteins. The sequence is that of Cytosolic Fe-S cluster assembly factor nar1 (nar1) from Aspergillus flavus (strain ATCC 200026 / FGSC A1120 / IAM 13836 / NRRL 3357 / JCM 12722 / SRRC 167).